The primary structure comprises 223 residues: Ribose-5-phosphate isomerase A (223 aa).

Substrate-binding positions include 29 to 32, 82 to 85, and 95 to 98; these read TGST, DGAD, and KGGG. The active-site Proton acceptor is E104. Residue K122 coordinates substrate.

Belongs to the ribose 5-phosphate isomerase family. As to quaternary structure, homodimer.

The catalysed reaction is aldehydo-D-ribose 5-phosphate = D-ribulose 5-phosphate. It participates in carbohydrate degradation; pentose phosphate pathway; D-ribose 5-phosphate from D-ribulose 5-phosphate (non-oxidative stage): step 1/1. In terms of biological role, catalyzes the reversible conversion of ribose-5-phosphate to ribulose 5-phosphate. This Neisseria meningitidis serogroup C (strain 053442) protein is Ribose-5-phosphate isomerase A.